Consider the following 371-residue polypeptide: Sporulation-specific protein 2 (371 aa).

It is found in the spore wall. Its function is as follows. Essential for sporulation and seems to have a role at the time of, or after, initiation of nuclear division. Appears to have a role in outer spore wall formation. The protein is Sporulation-specific protein 2 (SSP2) of Saccharomyces cerevisiae (strain ATCC 204508 / S288c) (Baker's yeast).